The primary structure comprises 305 residues: LysM and putative peptidoglycan-binding domain-containing protein 3 (305 aa).

The Extracellular portion of the chain corresponds to 1–221 (MTGRNQHNGF…PYYGADWGMR (221 aa)). Residue Asn29 is glycosylated (N-linked (GlcNAc...) asparagine). The tract at residues 31–60 (SETEYSEEDGEAFELRSRGRERHHRSTSRD) is disordered. Residues 68–112 (LIREIKEGDTLISISLQYFCTVADIKRANNLLTEQDFFALRSLRI) form the LysM domain. Positions 121 to 144 (TETHNTAPHKSSSPSGTCRITETP) are enriched in polar residues. Residues 121–156 (TETHNTAPHKSSSPSGTCRITETPVSGASLDSTSSS) are disordered. Positions 146 to 156 (SGASLDSTSSS) are enriched in low complexity. Residues 222–242 (WWTAVAIMLVVGIVTPVFYLL) traverse the membrane as a helical segment. The Cytoplasmic segment spans residues 243–305 (YYEVLMKADV…QHHVKHQEET (63 aa)).

It is found in the cell membrane. The protein resides in the golgi apparatus. Essential for Golgi structural integrity. The polypeptide is LysM and putative peptidoglycan-binding domain-containing protein 3 (lysmd3) (Danio rerio (Zebrafish)).